The sequence spans 394 residues: Elongation factor Tu 2 (394 aa).

The tr-type G domain maps to 10-204 (KPHVNVGTIG…ALDTYIPEPE (195 aa)). The tract at residues 19 to 26 (GHVDHGKT) is G1. A GTP-binding site is contributed by 19–26 (GHVDHGKT). Thr-26 lines the Mg(2+) pocket. The interval 60–64 (GITIS) is G2. The tract at residues 81–84 (DCPG) is G3. Residues 81–85 (DCPGH) and 136–139 (NKCD) contribute to the GTP site. The segment at 136–139 (NKCD) is G4. The G5 stretch occupies residues 174–176 (SAL).

The protein belongs to the TRAFAC class translation factor GTPase superfamily. Classic translation factor GTPase family. EF-Tu/EF-1A subfamily. Monomer.

The protein resides in the cytoplasm. The catalysed reaction is GTP + H2O = GDP + phosphate + H(+). Functionally, GTP hydrolase that promotes the GTP-dependent binding of aminoacyl-tRNA to the A-site of ribosomes during protein biosynthesis. This Vibrio vulnificus (strain CMCP6) protein is Elongation factor Tu 2.